The chain runs to 593 residues: Myc box-dependent-interacting protein 1 (593 aa).

Ala-2 carries the post-translational modification N-acetylalanine. Positions 2-122 (AEMGSKGVTA…DYHQKLVDQA (121 aa)) are interaction with BIN2. Coiled coils occupy residues 15 to 42 (ASNV…TKDE) and 193 to 267 (HLVA…NDVL). The BAR domain occupies 29 to 276 (VLQKLGKADE…LVGLEKQHGS (248 aa)). Disordered regions lie at residues 280 to 354 (TVKA…KEVK) and 400 to 488 (PVTS…AASS). 3 positions are modified to phosphoserine: Ser-296, Ser-298, and Ser-303. 2 positions are modified to phosphothreonine: Thr-307 and Thr-323. Ser-331 bears the Phosphoserine mark. The tract at residues 378 to 421 (FEAPGPFSEQASLLDLDFDPLPPVTSPVKAPTPSGQSIPWDLWE) is clathrin-binding. One can recognise an SH3 domain in the interval 520–593 (GFMFKVQAQH…FPENFTERVP (74 aa)).

Heterodimer with AMPH. Binds SH3GLB1. Interacts (via SH3 domain) with DNM1. Interacts with SYNJ1. Interacts (via SH3 domain) with DNM2. Isoform IIA interacts with CLTC. Isoform IIB does not interact with CLTC. Isoform IIC1 does not interact with CLTC. Isoform IIC2 does not interact with CLTC. Interacts with AP2A2. Interacts with AP2B1. Interacts with MYC (via N-terminal transactivation domain); the interaction requires the integrity of the conserved MYC box regions 1 and 2. Interacts with BIN2. Interacts with SNX4. Interacts (via BAR domain) with BACE1. Binds (via BAR domain) F-actin. In terms of assembly, (Microbial infection) Interacts (SH3 domain) with HCV NS5A. Phosphorylated by protein kinase C. In terms of tissue distribution, ubiquitous. Highest expression in the brain and muscle. Expressed in oligodendrocytes. Isoform IIA is expressed only in the brain, where it is detected in the gray matter, but not in the white matter. Isoform BIN1 is widely expressed with highest expression in skeletal muscle.

It is found in the nucleus. The protein resides in the cytoplasm. It localises to the endosome. Its subcellular location is the cell membrane. The protein localises to the sarcolemma. It is found in the T-tubule. Its function is as follows. Is a key player in the control of plasma membrane curvature, membrane shaping and membrane remodeling. Required in muscle cells for the formation of T-tubules, tubular invaginations of the plasma membrane that function in depolarization-contraction coupling. Is a negative regulator of endocytosis. Is also involved in the regulation of intracellular vesicles sorting, modulation of BACE1 trafficking and the control of amyloid-beta production. In neuronal circuits, endocytosis regulation may influence the internalization of PHF-tau aggregates. May be involved in the regulation of MYC activity and the control cell proliferation. Has actin bundling activity and stabilizes actin filaments against depolymerization in vitro. This Homo sapiens (Human) protein is Myc box-dependent-interacting protein 1 (BIN1).